Reading from the N-terminus, the 67-residue chain is Large ribosomal subunit protein bL35 (67 aa).

A disordered region spans residues 21–50 (KVMCGPGNKRHGLINRPQKMKRTNRGPQTM). The span at 28–44 (NKRHGLINRPQKMKRTN) shows a compositional bias: basic residues.

The protein belongs to the bacterial ribosomal protein bL35 family.

In Gluconobacter oxydans (strain 621H) (Gluconobacter suboxydans), this protein is Large ribosomal subunit protein bL35.